A 490-amino-acid chain; its full sequence is 2,3-bisphosphoglycerate-independent phosphoglycerate mutase (490 aa).

Aspartate 9 and serine 59 together coordinate Mn(2+). Serine 59 acts as the Phosphoserine intermediate in catalysis. Substrate is bound by residues histidine 116, 145–146 (RD), arginine 175, arginine 181, 246–249 (RSDR), and lysine 319. Residues aspartate 385, histidine 389, aspartate 426, histidine 427, and histidine 444 each coordinate Mn(2+).

Belongs to the BPG-independent phosphoglycerate mutase family. In terms of assembly, monomer. The cofactor is Mn(2+).

The catalysed reaction is (2R)-2-phosphoglycerate = (2R)-3-phosphoglycerate. It participates in carbohydrate degradation; glycolysis; pyruvate from D-glyceraldehyde 3-phosphate: step 3/5. Functionally, catalyzes the interconversion of 2-phosphoglycerate and 3-phosphoglycerate. This Helicobacter hepaticus (strain ATCC 51449 / 3B1) protein is 2,3-bisphosphoglycerate-independent phosphoglycerate mutase.